Reading from the N-terminus, the 429-residue chain is MKKFDKSIAAFEEAQDLMPGGVNSPVRAFKSVGMNPLFMERGKGSKVYDIDGNEYIDYVLSWGPLIHGHANDRVVEALKAVAERGTSFGAPTEIENKLAKLVIERVPSIEIVRMVNSGTEATMSALRLARGYTGRNKILKFIGCYHGHGDSLLIKAGSGVATLGLPDSPGVPEGVAKNTITVAYNDLESVKYAFEQFGDDIACVIVEPVAGNMGVVPPQPGFLEGLREVTEQNGALLIFDEVMTGFRVAYNCGQGYYGVTPDLTCLGKVIGGGLPVGAYGGKAEIMRQVAPSGPIYQAGTLSGNPLAMAAGYETLVQLTPESYVEFERKAEMLEAGLRKAAEKHGIPHHINRAGSMIGIFFTDEPVINYDAAKSSNLQFFAAYYREMVEQGVFLPPSQFEGLFLSTAHSDADIEATIAAAEIAMSKLKA.

K268 is subject to N6-(pyridoxal phosphate)lysine.

Belongs to the class-III pyridoxal-phosphate-dependent aminotransferase family. HemL subfamily. As to quaternary structure, homodimer. Requires pyridoxal 5'-phosphate as cofactor.

It localises to the cytoplasm. It carries out the reaction (S)-4-amino-5-oxopentanoate = 5-aminolevulinate. The protein operates within porphyrin-containing compound metabolism; protoporphyrin-IX biosynthesis; 5-aminolevulinate from L-glutamyl-tRNA(Glu): step 2/2. This Bacillus thuringiensis (strain Al Hakam) protein is Glutamate-1-semialdehyde 2,1-aminomutase 2.